Consider the following 332-residue polypeptide: D-glutamate N-acetyltransferase (332 aa).

This sequence belongs to the N-acetyltransferase DgcN family.

It catalyses the reaction D-glutamate + acetyl-CoA = N-acetyl-D-glutamate + CoA + H(+). It carries out the reaction D-aspartate + acetyl-CoA = N-acetyl-D-aspartate + CoA + H(+). The catalysed reaction is D-glutamine + acetyl-CoA = N-acetyl-D-glutamine + CoA + H(+). It functions in the pathway amino-acid degradation. In terms of biological role, N-acetyltransferase involved in a deamination-independent D-glutamate degradation pathway, named the DgcN-DgcA pathway. Catalyzes the transfer of the acetyl moiety from acetyl-CoA to D-glutamate to generate N-acetyl-D-glutamate. Can also acetylate D-aspartate and D-glutamine, with lower efficiency. Has low activity with D-asparagine. Cannot use succinyl-CoA. In Pseudoalteromonas sp, this protein is D-glutamate N-acetyltransferase.